The chain runs to 228 residues: Cytochrome c oxidase subunit 2 (228 aa).

Topologically, residues 1–14 (MAYPLQLGFQDATS) are mitochondrial intermembrane. The chain crosses the membrane as a helical span at residues 15-45 (PVMEELLHFHDHTLMIIFLISSLVLYIIMLM). Residues 46-59 (LTSKLVHTNMMNVQ) are Mitochondrial matrix-facing. The helical transmembrane segment at 60 to 87 (EMEMIWTILPAIILILIALPSLHTLYMM) threads the bilayer. The Mitochondrial intermembrane portion of the chain corresponds to 88–228 (DEINNPLLTI…FENWSASLAQ (141 aa)). Histidine 161, cysteine 196, glutamate 198, cysteine 200, histidine 204, and methionine 207 together coordinate Cu cation. A Mg(2+)-binding site is contributed by glutamate 198. Tyrosine 218 is subject to Phosphotyrosine.

This sequence belongs to the cytochrome c oxidase subunit 2 family. In terms of assembly, component of the cytochrome c oxidase (complex IV, CIV), a multisubunit enzyme composed of 14 subunits. The complex is composed of a catalytic core of 3 subunits MT-CO1, MT-CO2 and MT-CO3, encoded in the mitochondrial DNA, and 11 supernumerary subunits COX4I, COX5A, COX5B, COX6A, COX6B, COX6C, COX7A, COX7B, COX7C, COX8 and NDUFA4, which are encoded in the nuclear genome. The complex exists as a monomer or a dimer and forms supercomplexes (SCs) in the inner mitochondrial membrane with NADH-ubiquinone oxidoreductase (complex I, CI) and ubiquinol-cytochrome c oxidoreductase (cytochrome b-c1 complex, complex III, CIII), resulting in different assemblies (supercomplex SCI(1)III(2)IV(1) and megacomplex MCI(2)III(2)IV(2)). Found in a complex with TMEM177, COA6, COX18, COX20, SCO1 and SCO2. Interacts with TMEM177 in a COX20-dependent manner. Interacts with COX20. Interacts with COX16. The cofactor is Cu cation.

Its subcellular location is the mitochondrion inner membrane. The catalysed reaction is 4 Fe(II)-[cytochrome c] + O2 + 8 H(+)(in) = 4 Fe(III)-[cytochrome c] + 2 H2O + 4 H(+)(out). Component of the cytochrome c oxidase, the last enzyme in the mitochondrial electron transport chain which drives oxidative phosphorylation. The respiratory chain contains 3 multisubunit complexes succinate dehydrogenase (complex II, CII), ubiquinol-cytochrome c oxidoreductase (cytochrome b-c1 complex, complex III, CIII) and cytochrome c oxidase (complex IV, CIV), that cooperate to transfer electrons derived from NADH and succinate to molecular oxygen, creating an electrochemical gradient over the inner membrane that drives transmembrane transport and the ATP synthase. Cytochrome c oxidase is the component of the respiratory chain that catalyzes the reduction of oxygen to water. Electrons originating from reduced cytochrome c in the intermembrane space (IMS) are transferred via the dinuclear copper A center (CU(A)) of subunit 2 and heme A of subunit 1 to the active site in subunit 1, a binuclear center (BNC) formed by heme A3 and copper B (CU(B)). The BNC reduces molecular oxygen to 2 water molecules using 4 electrons from cytochrome c in the IMS and 4 protons from the mitochondrial matrix. This is Cytochrome c oxidase subunit 2 (MT-CO2) from Loxodonta africana (African elephant).